The primary structure comprises 400 residues: Polyadenylate-binding protein-interacting protein 1 (400 aa).

The segment covering 1–10 has biased composition (basic and acidic residues); that stretch reads MSDSFDRAPE. The disordered stretch occupies residues 1–36; that stretch reads MSDSFDRAPEQTKPQRAPPSSQDKIPQQNSESAMAK. Polar residues predominate over residues 12-32; that stretch reads TKPQRAPPSSQDKIPQQNSES. Positions 37–64 are PABPC1-interacting motif-2 (PAM2); that stretch reads PQVVVAPVLMSKLSANAPEFYPSGYSSN. Residues 78 to 296 form a PAIP1 middle domain (PAIP1M) region; that stretch reads TLSEYVQDFL…LLKLVELRSS (219 aa). In terms of domain architecture, MIF4G spans 80-297; sequence SEYVQDFLNH…LKLVELRSSN (218 aa). The segment at 356-376 is disordered; that stretch reads DYEENGTDLSGAGDPYLDDID. The segment at 361-400 is PABPC1-interacting motif-1 (PAM1); the sequence is GTDLSGAGDPYLDDIDDEMDPEIEEAYEKFCLESERKRKQ.

In terms of assembly, interacts with the RRM1-RRM2 and C-terminus regions of PABPC1 in a 1:1 stoichiometry. Interacts with EIF4A.

The protein localises to the cytoplasm. In terms of biological role, acts as a coactivator in the regulation of translation initiation of poly(A)-containing mRNAs. Its stimulatory activity on translation is mediated via its action on PABPC1. Competes with PAIP2 for binding to PABPC1. Its association with EIF4A and PABPC1 may potentiate contacts between mRNA termini. May also be involved in translationally coupled mRNA turnover. Implicated with other RNA-binding proteins in the cytoplasmic deadenylation/translational and decay interplay of the FOS mRNA mediated by the major coding-region determinant of instability (mCRD) domain. In Mus musculus (Mouse), this protein is Polyadenylate-binding protein-interacting protein 1 (Paip1).